We begin with the raw amino-acid sequence, 340 residues long: Alcohol dehydrogenase patD (340 aa).

Cys-46 serves as a coordination point for Zn(2+). His-47 contributes to the NAD(+) binding site. Positions 67, 68, 101, 104, 112, and 154 each coordinate Zn(2+). His-67 lines the substrate pocket. Residues 178 to 183 (GLGGLG), 198 to 203 (VALSRD), Lys-206, 265 to 267 (LSI), 289 to 291 (PSG), and 297 to 299 (EDA) each bind NAD(+).

The protein belongs to the zinc-containing alcohol dehydrogenase family. Zn(2+) is required as a cofactor.

The protein resides in the cytoplasm. The protein localises to the cytosol. It catalyses the reaction neopatulin + NADPH + H(+) = (E)-ascladiol + NADP(+). Its pathway is mycotoxin biosynthesis; patulin biosynthesis. Functionally, alcohol dehydrogenase; part of the gene cluster that mediates the biosynthesis of patulin, an acetate-derived tetraketide mycotoxin produced by several fungal species that shows antimicrobial properties against several bacteria. PatD catalyzes the conversion of neopatulin into E-ascladiol. The pathway begins with the synthesis of 6-methylsalicylic acid by the polyketide synthase (PKS) patK via condensation of acetate and malonate units. The 6-methylsalicylic acid decarboxylase patG then catalyzes the decarboxylation of 6-methylsalicylic acid to yield m-cresol (also known as 3-methylphenol). These first reactions occur in the cytosol. The intermediate m-cresol is then transported into the endoplasmic reticulum where the cytochrome P450 monooxygenase patH converts it to m-hydroxybenzyl alcohol, which is further converted to gentisyl alcohol by the cytochrome P450 monooxygenase patI. The oxidoreductases patJ and patO further convert gentisyl alcohol to isoepoxydon in the vacuole. PatN catalyzes then the transformation of isoepoxydon into phyllostine. The cluster protein patF is responsible for the conversion from phyllostine to neopatulin whereas the alcohol dehydrogenase patD converts neopatulin to E-ascladiol. The steps between isoepoxydon and E-ascladiol occur in the cytosol, and E-ascladiol is probably secreted to the extracellular space by one of the cluster-specific transporters patC or patM. Finally, the secreted patulin synthase patE catalyzes the conversion of E-ascladiol to patulin. This is Alcohol dehydrogenase patD from Penicillium expansum (Blue mold rot fungus).